The chain runs to 346 residues: Sulfate/thiosulfate import ATP-binding protein CysA 1 (346 aa).

Residues Val3–Ile237 enclose the ABC transporter domain. Gly35–Thr42 is an ATP binding site.

Belongs to the ABC transporter superfamily. Sulfate/tungstate importer (TC 3.A.1.6) family. In terms of assembly, the complex is composed of two ATP-binding proteins (CysA), two transmembrane proteins (CysT and CysW) and a solute-binding protein (CysP).

Its subcellular location is the cell inner membrane. It carries out the reaction sulfate(out) + ATP + H2O = sulfate(in) + ADP + phosphate + H(+). The enzyme catalyses thiosulfate(out) + ATP + H2O = thiosulfate(in) + ADP + phosphate + H(+). Its function is as follows. Part of the ABC transporter complex CysAWTP involved in sulfate/thiosulfate import. Responsible for energy coupling to the transport system. The protein is Sulfate/thiosulfate import ATP-binding protein CysA 1 of Agrobacterium fabrum (strain C58 / ATCC 33970) (Agrobacterium tumefaciens (strain C58)).